The sequence spans 5634 residues: Hemicentin-1 (5634 aa).

The N-terminal stretch at 1 to 21 is a signal peptide; the sequence is MIAQEVVHTVFLVALFRSSLA. Positions 41 to 216 constitute a VWFA domain; it reads TLAFVFDVTG…EVLKWVEEAV (176 aa). Ig-like C2-type domains are found at residues 431–517, 520–607, 612–697, 702–788, 793–883, 890–976, 981–1067, 1072–1166, 1171–1254, 1261–1353, 1357–1446, 1451–1540, 1545–1633, 1638–1723, 1732–1820, 1825–1913, 1918–2006, 2011–2096, 2103–2189, 2194–2284, 2289–2378, 2383–2472, 2477–2565, 2570–2661, 2665–2762, 2765–2863, 2867–2958, 2962–3050, and 3055–3145; these read PKVT…FDVS, PPII…VFLT, PKVT…STLR, PKLV…LTLD, PVFI…TTVT, PLIG…TSVA, PSIQ…VQLT, PRVF…VKLS, PKIQ…AEVT, PSVE…YNLK, PPVI…FSVN, PSIL…IKLT, PSIK…FHVD, PTIE…REIK, PAVE…FEVT, PTIK…TQLH, PSLD…YSLQ, PSIS…RDID, PNIM…YNVN, PSIY…YNLQ, PSIT…YDLS, PSII…FGLS, PHIV…FRLN, PTIA…YEVK, PPII…VNIQ, PSFQ…YDVH, PPVI…FNLN, PPSV…VSLT, and PSIK…FHLN. 2 cysteine pairs are disulfide-bonded: cysteine 451/cysteine 499 and cysteine 541/cysteine 591. Threonine 615 is a glycosylation site (O-linked (GalNAc...) threonine). 11 cysteine pairs are disulfide-bonded: cysteine 633-cysteine 681, cysteine 723-cysteine 772, cysteine 814-cysteine 867, cysteine 911-cysteine 960, cysteine 1002-cysteine 1051, cysteine 1101-cysteine 1150, cysteine 1192-cysteine 1240, cysteine 1287-cysteine 1337, cysteine 1381-cysteine 1430, cysteine 1474-cysteine 1524, and cysteine 1568-cysteine 1617. O-linked (GalNAc...) threonine glycosylation is found at threonine 1292 and threonine 1386. Residue threonine 1639 is glycosylated (O-linked (GalNAc...) threonine). Intrachain disulfides connect cysteine 1662-cysteine 1711 and cysteine 1755-cysteine 1804. Threonine 1826 carries O-linked (GalNAc...) threonine glycosylation. 14 disulfide bridges follow: cysteine 1847–cysteine 1897, cysteine 1941–cysteine 1990, cysteine 2032–cysteine 2082, cysteine 2124–cysteine 2173, cysteine 2217–cysteine 2268, cysteine 2313–cysteine 2362, cysteine 2407–cysteine 2456, cysteine 2500–cysteine 2549, cysteine 2596–cysteine 2645, cysteine 2695–cysteine 2744, cysteine 2798–cysteine 2847, cysteine 2893–cysteine 2942, cysteine 2985–cysteine 3034, and cysteine 3080–cysteine 3129. Residue threonine 3151 is glycosylated (O-linked (GalNAc...) threonine). 15 Ig-like C2-type domains span residues 3155 to 3227, 3244 to 3334, 3339 to 3428, 3433 to 3515, 3526 to 3614, 3619 to 3707, 3712 to 3798, 3803 to 3891, 3896 to 3982, 3987 to 4073, 4077 to 4163, 4168 to 4252, 4259 to 4332, 4347 to 4434, and 4439 to 4526; these read PETE…VASN, PSVA…FNLN, PKIR…YSLQ, PNMD…GEVS, PHIN…YLVR, PNIA…FNLT, PSIG…IDLQ, PSIA…VDLT, PTIA…VTLR, PVIQ…VKLN, PPVI…STLT, PRIQ…RIVT, PTFT…AENS, PPVF…MSLT, and PIIT…VIVQ. 8 disulfide bridges follow: cysteine 3172–cysteine 3223, cysteine 3267–cysteine 3318, cysteine 3363–cysteine 3412, cysteine 3456–cysteine 3505, cysteine 3549–cysteine 3598, cysteine 3642–cysteine 3691, cysteine 3733–cysteine 3782, and cysteine 3824–cysteine 3875. O-linked (GalNAc...) threonine glycosylation occurs at threonine 3897. Intrachain disulfides connect cysteine 3917–cysteine 3966, cysteine 4008–cysteine 4057, cysteine 4099–cysteine 4147, cysteine 4189–cysteine 4238, cysteine 4280–cysteine 4327, cysteine 4370–cysteine 4418, cysteine 4460–cysteine 4508, cysteine 4540–cysteine 4577, cysteine 4544–cysteine 4582, cysteine 4555–cysteine 4567, cysteine 4597–cysteine 4634, cysteine 4601–cysteine 4639, cysteine 4612–cysteine 4624, cysteine 4654–cysteine 4691, cysteine 4658–cysteine 4696, cysteine 4669–cysteine 4681, cysteine 4711–cysteine 4748, cysteine 4715–cysteine 4753, cysteine 4726–cysteine 4738, cysteine 4768–cysteine 4805, cysteine 4772–cysteine 4810, cysteine 4783–cysteine 4795, cysteine 4825–cysteine 4862, cysteine 4829–cysteine 4867, and cysteine 4840–cysteine 4852. O-linked (GalNAc...) threonine glycosylation is present at threonine 4379. 6 TSP type-1 domains span residues 4528 to 4583, 4585 to 4640, 4642 to 4697, 4699 to 4754, 4756 to 4811, and 4813 to 4868; these read HGGF…KLCP, DGHW…RPCP, HGVW…RHCP, DGRW…DPCP, HGNW…DMCP, and DGSW…QACP. The 223-residue stretch at 4870–5092 folds into the Nidogen G2 beta-barrel domain; sequence GPQRARGSVI…SKGDRSNQCP (223 aa). One can recognise an EGF-like 1; calcium-binding domain in the interval 5106–5145; the sequence is DEDECTAGNPCSHTCHNAIGAYYCSCPKGLTIAADGRTCQ. Intrachain disulfides connect cysteine 5110–cysteine 5120, cysteine 5116–cysteine 5129, and cysteine 5131–cysteine 5144. An EGF-like 2; calcium-binding domain is found at 5146-5189; the sequence is DIDECALGGHTCRAGQDCDNTIGSYRCVVHCGTGFRRTSDGLSC. Residues 5191 to 5228 enclose the EGF-like 3; calcium-binding domain; that stretch reads DINECQESSPCHQRCFNVIGSFHCGCEAGYQLKGRKCI. Intrachain disulfides connect cysteine 5195/cysteine 5205, cysteine 5201/cysteine 5214, and cysteine 5216/cysteine 5227. The 41-residue stretch at 5229-5269 folds into the EGF-like 4; calcium-binding domain; the sequence is DVNECRQNVCRPDQHCKNTRGGYKCIDLCPSGMTKAENGTC. Residues 5271–5306 enclose the EGF-like 5; calcium-binding domain; the sequence is DIDECKDGTHQCRYNQICENTRGSYRCACPRGYRSQ. 8 cysteine pairs are disulfide-bonded: cysteine 5275/cysteine 5288, cysteine 5282/cysteine 5297, cysteine 5318/cysteine 5329, cysteine 5325/cysteine 5338, cysteine 5340/cysteine 5353, cysteine 5435/cysteine 5445, cysteine 5441/cysteine 5454, and cysteine 5456/cysteine 5469. Residues 5314 to 5354 form the EGF-like 6; calcium-binding domain; it reads DINECEQVPKPCAHQCSNSPGSFKCICLPGQQLLGDGKSCA. The region spanning 5431–5470 is the EGF-like 7; calcium-binding domain; it reads DIDECQNRDTCQHECKNTIGSYQCVCPPGYRLMLNGKTCQ.

In the kidney, expressed in the glomerulus (at protein level). Expressed in whisker and hair follicles, eye, tongue, and splenic and lymph node conduits (at protein level). In the embryo, localizes to the cleavage furrow at the two-cell stage (at protein level). In neonatal skin, expressed throughout the dermis (at protein level). In adult skin, strongly concentrated at the dermal side of the basement membrane but not detectable in the deeper dermis. Shows tendon-specific localization at the myotendinous junction and is also detected in the perichondrium (at protein level). Expressed by chondrocytes residing in articular cartilage and the femoral growth plate of 52 week old mice (at protein level). Expressed in vascular endothelial cells in coronary arteries and sparsely in endocardial endothelium (at protein level). Expressed in skin, tongue, lung and eye. At 14.5 dpc, expressed in the vibrissae, dermis, forelimb, kidney, intestine, lung and iliac cartilage where expression is found mainly in mesenchymal cells.

It localises to the secreted. The protein localises to the extracellular space. The protein resides in the extracellular matrix. It is found in the basement membrane. Its subcellular location is the cytoplasm. It localises to the cell junction. The protein localises to the cleavage furrow. Its function is as follows. Involved in transforming growth factor beta-mediated rearrangement of the podocyte cytoskeleton which includes reduction of F-actin fibers and broadening, flattening and elongation of podocytes. Plays a role in basement membrane organization. May promote cleavage furrow maturation during cytokinesis in preimplantation embryos. May play a role in the architecture of adhesive and flexible epithelial cell junctions. May play a role during myocardial remodeling by imparting an effect on cardiac fibroblast migration. The polypeptide is Hemicentin-1 (Mus musculus (Mouse)).